The chain runs to 110 residues: Insulin (110 aa).

The N-terminal stretch at 1–24 (MALWMRLLPLLALLALWAPAPTRA) is a signal peptide. Cystine bridges form between Cys-31–Cys-96, Cys-43–Cys-109, and Cys-95–Cys-100. Residues 57 to 87 (EVEDLQVRDVELAGAPGEGGLQPLALEGALQ) constitute a propeptide, c peptide.

The protein belongs to the insulin family. As to quaternary structure, heterodimer of a B chain and an A chain linked by two disulfide bonds.

The protein resides in the secreted. Functionally, insulin decreases blood glucose concentration. It increases cell permeability to monosaccharides, amino acids and fatty acids. It accelerates glycolysis, the pentose phosphate cycle, and glycogen synthesis in liver. This chain is Insulin (INS), found in Canis lupus familiaris (Dog).